A 313-amino-acid chain; its full sequence is Methionyl-tRNA formyltransferase (313 aa).

Residue 113 to 116 (SLLP) coordinates (6S)-5,6,7,8-tetrahydrofolate.

Belongs to the Fmt family.

It carries out the reaction L-methionyl-tRNA(fMet) + (6R)-10-formyltetrahydrofolate = N-formyl-L-methionyl-tRNA(fMet) + (6S)-5,6,7,8-tetrahydrofolate + H(+). Attaches a formyl group to the free amino group of methionyl-tRNA(fMet). The formyl group appears to play a dual role in the initiator identity of N-formylmethionyl-tRNA by promoting its recognition by IF2 and preventing the misappropriation of this tRNA by the elongation apparatus. The chain is Methionyl-tRNA formyltransferase from Francisella tularensis subsp. holarctica (strain FTNF002-00 / FTA).